Reading from the N-terminus, the 220-residue chain is uncharacterized protein (220 aa).

This is an uncharacterized protein from Sinorhizobium fredii (strain NBRC 101917 / NGR234).